We begin with the raw amino-acid sequence, 190 residues long: Segregation and condensation protein B (190 aa).

It belongs to the ScpB family. In terms of assembly, homodimer. Homodimerization may be required to stabilize the binding of ScpA to the Smc head domains. Component of a cohesin-like complex composed of ScpA, ScpB and the Smc homodimer, in which ScpA and ScpB bind to the head domain of Smc. The presence of the three proteins is required for the association of the complex with DNA.

It localises to the cytoplasm. In terms of biological role, participates in chromosomal partition during cell division. May act via the formation of a condensin-like complex containing Smc and ScpA that pull DNA away from mid-cell into both cell halves. The protein is Segregation and condensation protein B of Bacillus cereus (strain ZK / E33L).